A 791-amino-acid polypeptide reads, in one-letter code: MTTMAAAGLTDAEVAQRIAEGKTNDVPTRAARTVSEIVRANVFTRINAILGVLFVIVLSTGSVINGAFGLLIIANSAIGIIQEIRAKQTLDKLAIVGQAKPTVRRQSGTRAVLPSEVVLDDIIELGPGDQIVVDGEVVEETNLEVDESLLTGEADPIAKDAGDPVMSGSFVVAGSGAYRATKVGREAYAAKLAEEASKFTLVKSELRNGINKILQFITYLLVPAGLLTIYTQLFTTDAGWREAVLRMVGALVPMVPEGLVLMTSIAFAVGVVRLGRRQCLVNELPAIEGLARVDVVCADKTGTLTENGMRVSDLKSLTEGHVADVLAQLASDDARPNASMAAIAEAYQTPPGWSATATAPFKSATKWSGTSYGEHGNWVIGAPDVLLDPASPVAEEAERIGAQGLRVLLLGSSDRSVDAPDAPGVVTPAALVVLEQRIRPDAGDTLDYFASQHVSVKVISGDNAVSVGAVAGKLGLHGETMDARRLPEQPEKLAETLEECTTFGRVRPDQKRAMVHALQSRGHTVAMTGDGVNDVLALKDSDIGVAMGSGSSASRAVAQIVLLDNKFATLPYVVGEGRRVIGNIERVSNLFLTKTVYSVLLAILVGIGGLSAKIFGTDPLLFPFQPIHVTIAAWFTIGIPAFILSLAPNNERAKTGFVRRVMTAALPSGLVVGTATFVSYLVAYQGREATPVEQTQASTAALITLLASSLWVLAVVARPYQWWRVLLVACSMLAYVLIFSIPLAQELFMLDPTNMKVTSVALGIGLAGAALIEVLWWVQGRVLGEERRVWR.

3 helical membrane passes run 53–73 (LFVI…LLII), 213–233 (ILQF…YTQL), and 252–272 (VPMV…VGVV). D299 serves as the catalytic 4-aspartylphosphate intermediate. Residues D299, T301, and D530 each contribute to the Mg(2+) site. A run of 6 helical transmembrane segments spans residues 596–616 (VYSV…KIFG), 627–647 (IHVT…LSLA), 664–684 (AALP…LVAY), 697–717 (ASTA…AVVA), 725–745 (VLLV…PLAQ), and 757–777 (VTSV…VLWW).

Belongs to the cation transport ATPase (P-type) (TC 3.A.3) family.

The protein resides in the cell membrane. The catalysed reaction is Ca(2+)(in) + ATP + H2O = Ca(2+)(out) + ADP + phosphate + H(+). Its function is as follows. P-type ATPase involved in specific uptake of calcium. Essential for growth and maintenance of cell surface integrity under Ca(2+)-deficient conditions. The polypeptide is Calcium-transporting ATPase CtpE (Mycolicibacterium smegmatis (strain ATCC 700084 / mc(2)155) (Mycobacterium smegmatis)).